A 115-amino-acid chain; its full sequence is Large ribosomal subunit protein bL19 (115 aa).

Belongs to the bacterial ribosomal protein bL19 family.

Its function is as follows. This protein is located at the 30S-50S ribosomal subunit interface and may play a role in the structure and function of the aminoacyl-tRNA binding site. The sequence is that of Large ribosomal subunit protein bL19 from Francisella philomiragia subsp. philomiragia (strain ATCC 25017 / CCUG 19701 / FSC 153 / O#319-036).